The sequence spans 211 residues: Uracil phosphoribosyltransferase (211 aa).

Residues Arg-78, Arg-103, and 130-138 (DPMLATGGT) contribute to the 5-phospho-alpha-D-ribose 1-diphosphate site. Uracil-binding positions include Ile-195 and 200–202 (GDA). 5-phospho-alpha-D-ribose 1-diphosphate is bound at residue Asp-201.

This sequence belongs to the UPRTase family. The cofactor is Mg(2+).

The catalysed reaction is UMP + diphosphate = 5-phospho-alpha-D-ribose 1-diphosphate + uracil. The protein operates within pyrimidine metabolism; UMP biosynthesis via salvage pathway; UMP from uracil: step 1/1. Allosterically activated by GTP. In terms of biological role, catalyzes the conversion of uracil and 5-phospho-alpha-D-ribose 1-diphosphate (PRPP) to UMP and diphosphate. The sequence is that of Uracil phosphoribosyltransferase from Arthrobacter sp. (strain FB24).